The sequence spans 176 residues: Small ribosomal subunit protein uS5 (176 aa).

The S5 DRBM domain occupies 14 to 77; sequence MQEKLIHINR…DQARRWMTSI (64 aa).

Belongs to the universal ribosomal protein uS5 family. In terms of assembly, part of the 30S ribosomal subunit. Contacts proteins S4 and S8.

With S4 and S12 plays an important role in translational accuracy. Functionally, located at the back of the 30S subunit body where it stabilizes the conformation of the head with respect to the body. In Acidithiobacillus ferrooxidans (strain ATCC 23270 / DSM 14882 / CIP 104768 / NCIMB 8455) (Ferrobacillus ferrooxidans (strain ATCC 23270)), this protein is Small ribosomal subunit protein uS5.